A 120-amino-acid polypeptide reads, in one-letter code: Ribosome-binding factor A (120 aa).

Belongs to the RbfA family. As to quaternary structure, monomer. Binds 30S ribosomal subunits, but not 50S ribosomal subunits or 70S ribosomes.

It localises to the cytoplasm. One of several proteins that assist in the late maturation steps of the functional core of the 30S ribosomal subunit. Associates with free 30S ribosomal subunits (but not with 30S subunits that are part of 70S ribosomes or polysomes). Required for efficient processing of 16S rRNA. May interact with the 5'-terminal helix region of 16S rRNA. This is Ribosome-binding factor A from Clostridium botulinum (strain Okra / Type B1).